A 264-amino-acid chain; its full sequence is Glutamate racemase (264 aa).

Substrate contacts are provided by residues Asp-10–Ser-11 and Tyr-42–Gly-43. Cys-73 serves as the catalytic Proton donor/acceptor. Substrate is bound at residue Asn-74–Thr-75. The active-site Proton donor/acceptor is Cys-183. Residue Thr-184–His-185 participates in substrate binding.

This sequence belongs to the aspartate/glutamate racemases family.

It carries out the reaction L-glutamate = D-glutamate. Its pathway is cell wall biogenesis; peptidoglycan biosynthesis. Provides the (R)-glutamate required for cell wall biosynthesis. The polypeptide is Glutamate racemase (Streptococcus sanguinis (strain SK36)).